A 555-amino-acid chain; its full sequence is CTP synthase (555 aa).

The segment at 1–271 is amidoligase domain; the sequence is MVKRGKKTKY…DDKLAELFNI (271 aa). Serine 19 is a binding site for CTP. Serine 19 serves as a coordination point for UTP. ATP is bound by residues 20-25 and aspartate 77; that span reads SLGKGL. Aspartate 77 and glutamate 145 together coordinate Mg(2+). Residues 152 to 154, 192 to 197, and lysine 228 each bind CTP; these read DIE and KTKPTQ. UTP-binding positions include 192–197 and lysine 228; that span reads KTKPTQ. Positions 297 to 537 constitute a Glutamine amidotransferase type-1 domain; it reads RIGIVGKYVE…VKAALEHRDA (241 aa). Glycine 358 contacts L-glutamine. Cysteine 385 acts as the Nucleophile; for glutamine hydrolysis in catalysis. L-glutamine contacts are provided by residues 386–389, glutamate 409, and arginine 466; that span reads LGLQ. Catalysis depends on residues histidine 510 and glutamate 512. Residues 535–555 form a disordered region; sequence RDAQQRQPPAEVKKLAVGKNG.

The protein belongs to the CTP synthase family. Homotetramer.

It catalyses the reaction UTP + L-glutamine + ATP + H2O = CTP + L-glutamate + ADP + phosphate + 2 H(+). The catalysed reaction is L-glutamine + H2O = L-glutamate + NH4(+). The enzyme catalyses UTP + NH4(+) + ATP = CTP + ADP + phosphate + 2 H(+). Its pathway is pyrimidine metabolism; CTP biosynthesis via de novo pathway; CTP from UDP: step 2/2. With respect to regulation, allosterically activated by GTP, when glutamine is the substrate; GTP has no effect on the reaction when ammonia is the substrate. The allosteric effector GTP functions by stabilizing the protein conformation that binds the tetrahedral intermediate(s) formed during glutamine hydrolysis. Inhibited by the product CTP, via allosteric rather than competitive inhibition. Catalyzes the ATP-dependent amination of UTP to CTP with either L-glutamine or ammonia as the source of nitrogen. Regulates intracellular CTP levels through interactions with the four ribonucleotide triphosphates. The protein is CTP synthase of Anaeromyxobacter sp. (strain K).